Reading from the N-terminus, the 329-residue chain is CDP-6-deoxy-L-threo-D-glycero-4-hexulose-3-dehydrase reductase (329 aa).

Residues 2–93 (SLNVKLHPSG…ELDVNYYPEL (92 aa)) enclose the 2Fe-2S ferredoxin-type domain. 4 residues coordinate [2Fe-2S] cluster: Cys-37, Cys-42, Cys-45, and Cys-75. One can recognise an FAD-binding FR-type domain in the interval 98–197 (KKTYPCKLDS…EGPQGTFFVR (100 aa)).

Monomer.

It participates in nucleotide-sugar biosynthesis; CDP-ascarylose biosynthesis. The protein operates within bacterial outer membrane biogenesis; lipopolysaccharide biosynthesis. Participates in the conversion of CDP-6-deoxy-D-glycero-L-threo-4-hexulose to 3,6-dideoxy-D-glycero-D-glycero-4-hexulose together with CDP-6-deoxy-D-glycero-L-threo-4-hexulose-3-dehydrase (E1) in two consecutive steps. The detailed mechanism of E3 is not yet resolved. This chain is CDP-6-deoxy-L-threo-D-glycero-4-hexulose-3-dehydrase reductase (ascD), found in Yersinia pestis.